The following is a 726-amino-acid chain: WD repeat and coiled-coil-containing protein (726 aa).

WD repeat units follow at residues 55-98 (GQFE…LDKN) and 154-194 (KSSG…LNAC). Positions 503-571 (SYDGDQSPTS…SSPPNFIKHG (69 aa)) are disordered. Positions 506-515 (GDQSPTSSAN) are enriched in polar residues. Positions 517-535 (FDDKRSKLRVESLDTEPKN) are enriched in basic and acidic residues. Polar residues predominate over residues 550–565 (SRPTSPKSECQKSSPP). Residues 581-609 (SISRNVERLCCNFAHLQQHLSELTDITRN) adopt a coiled-coil conformation.

This Xenopus tropicalis (Western clawed frog) protein is WD repeat and coiled-coil-containing protein (wdcp).